The following is a 252-amino-acid chain: Hydroxyacylglutathione hydrolase (252 aa).

Positions 54, 56, 58, 59, 113, 132, and 170 each coordinate Zn(2+).

Belongs to the metallo-beta-lactamase superfamily. Glyoxalase II family. Monomer. Zn(2+) serves as cofactor.

The catalysed reaction is an S-(2-hydroxyacyl)glutathione + H2O = a 2-hydroxy carboxylate + glutathione + H(+). It participates in secondary metabolite metabolism; methylglyoxal degradation; (R)-lactate from methylglyoxal: step 2/2. Thiolesterase that catalyzes the hydrolysis of S-D-lactoyl-glutathione to form glutathione and D-lactic acid. This Synechococcus sp. (strain JA-2-3B'a(2-13)) (Cyanobacteria bacterium Yellowstone B-Prime) protein is Hydroxyacylglutathione hydrolase.